The primary structure comprises 334 residues: Tryptophan--tRNA ligase (334 aa).

ATP contacts are provided by residues 11 to 13 (QPS) and 19 to 20 (GN). Positions 12–20 (PSGELTIGN) match the 'HIGH' region motif. Position 135 (aspartate 135) interacts with L-tryptophan. ATP contacts are provided by residues 147–149 (GED), valine 186, and 195–199 (KMSKS). Residues 195 to 199 (KMSKS) carry the 'KMSKS' region motif.

Belongs to the class-I aminoacyl-tRNA synthetase family. As to quaternary structure, homodimer.

The protein resides in the cytoplasm. It carries out the reaction tRNA(Trp) + L-tryptophan + ATP = L-tryptophyl-tRNA(Trp) + AMP + diphosphate + H(+). Its function is as follows. Catalyzes the attachment of tryptophan to tRNA(Trp). The protein is Tryptophan--tRNA ligase of Klebsiella aerogenes (Enterobacter aerogenes).